Reading from the N-terminus, the 682-residue chain is Methionine--tRNA ligase (682 aa).

The 'HIGH' region signature appears at 14-24 (PYANGPVHLGH). Cysteine 145, cysteine 148, cysteine 158, and cysteine 161 together coordinate Zn(2+). Residues 331-335 (KMSKS) carry the 'KMSKS' region motif. Lysine 334 contributes to the ATP binding site. In terms of domain architecture, tRNA-binding spans 580-682 (AFAAVDLRVA…SGAKPGQRIK (103 aa)).

It belongs to the class-I aminoacyl-tRNA synthetase family. MetG type 1 subfamily. Homodimer. Zn(2+) serves as cofactor.

The protein localises to the cytoplasm. It catalyses the reaction tRNA(Met) + L-methionine + ATP = L-methionyl-tRNA(Met) + AMP + diphosphate. In terms of biological role, is required not only for elongation of protein synthesis but also for the initiation of all mRNA translation through initiator tRNA(fMet) aminoacylation. The protein is Methionine--tRNA ligase of Pseudomonas syringae pv. tomato (strain ATCC BAA-871 / DC3000).